The chain runs to 217 residues: ATP-dependent Clp protease proteolytic subunit (217 aa).

Catalysis depends on Ser121, which acts as the Nucleophile. His146 is an active-site residue.

It belongs to the peptidase S14 family. Fourteen ClpP subunits assemble into 2 heptameric rings which stack back to back to give a disk-like structure with a central cavity, resembling the structure of eukaryotic proteasomes.

Its subcellular location is the cytoplasm. The enzyme catalyses Hydrolysis of proteins to small peptides in the presence of ATP and magnesium. alpha-casein is the usual test substrate. In the absence of ATP, only oligopeptides shorter than five residues are hydrolyzed (such as succinyl-Leu-Tyr-|-NHMec, and Leu-Tyr-Leu-|-Tyr-Trp, in which cleavage of the -Tyr-|-Leu- and -Tyr-|-Trp bonds also occurs).. Its function is as follows. Cleaves peptides in various proteins in a process that requires ATP hydrolysis. Has a chymotrypsin-like activity. Plays a major role in the degradation of misfolded proteins. This Burkholderia mallei (strain NCTC 10247) protein is ATP-dependent Clp protease proteolytic subunit.